Here is a 51-residue protein sequence, read N- to C-terminus: Defensin-like protein 2A (51 aa).

The residue at position 1 (Gln-1) is a Pyrrolidone carboxylic acid. Disulfide bonds link Cys-4-Cys-51, Cys-15-Cys-36, Cys-21-Cys-45, and Cys-25-Cys-47. Position 8 is a phosphoserine; by CPK (Ser-8).

Forms oligomers in its native state.

Possesses antifungal activity sensitive to inorganic cations. The protein is Defensin-like protein 2A of Sinapis alba (White mustard).